A 433-amino-acid chain; its full sequence is Serine--tRNA ligase (433 aa).

L-serine is bound at residue Thr-235 to Glu-237. ATP is bound at residue Arg-266–Glu-268. Glu-289 contributes to the L-serine binding site. Glu-353–Ser-356 serves as a coordination point for ATP. Ser-388 provides a ligand contact to L-serine.

Belongs to the class-II aminoacyl-tRNA synthetase family. Type-1 seryl-tRNA synthetase subfamily. Homodimer. The tRNA molecule binds across the dimer.

The protein localises to the cytoplasm. It catalyses the reaction tRNA(Ser) + L-serine + ATP = L-seryl-tRNA(Ser) + AMP + diphosphate + H(+). The enzyme catalyses tRNA(Sec) + L-serine + ATP = L-seryl-tRNA(Sec) + AMP + diphosphate + H(+). Its pathway is aminoacyl-tRNA biosynthesis; selenocysteinyl-tRNA(Sec) biosynthesis; L-seryl-tRNA(Sec) from L-serine and tRNA(Sec): step 1/1. Functionally, catalyzes the attachment of serine to tRNA(Ser). Is also able to aminoacylate tRNA(Sec) with serine, to form the misacylated tRNA L-seryl-tRNA(Sec), which will be further converted into selenocysteinyl-tRNA(Sec). The chain is Serine--tRNA ligase from Burkholderia thailandensis (strain ATCC 700388 / DSM 13276 / CCUG 48851 / CIP 106301 / E264).